The primary structure comprises 330 residues: Aspartate--ammonia ligase (330 aa).

Belongs to the class-II aminoacyl-tRNA synthetase family. AsnA subfamily.

The protein resides in the cytoplasm. It catalyses the reaction L-aspartate + NH4(+) + ATP = L-asparagine + AMP + diphosphate + H(+). It functions in the pathway amino-acid biosynthesis; L-asparagine biosynthesis; L-asparagine from L-aspartate (ammonia route): step 1/1. This chain is Aspartate--ammonia ligase, found in Streptococcus pyogenes serotype M2 (strain MGAS10270).